Here is a 481-residue protein sequence, read N- to C-terminus: G-protein coupled receptor 37-like 1 (481 aa).

Positions 1–24 are cleaved as a signal peptide; the sequence is MRWLWPLAVSLAVVLAVGPSEVSG. The Extracellular portion of the chain corresponds to 25-134; that stretch reads AATLSLGGHR…ESSYSAYAVM (110 aa). Disordered regions lie at residues 30–55 and 76–107; these read LGGH…GPKE and LQPT…TNLT. Over residues 95 to 107 the composition is skewed to polar residues; sequence TSESGQELRTNLT. Asparagine 105 carries N-linked (GlcNAc...) asparagine glycosylation. The helical transmembrane segment at 135–155 threads the bilayer; the sequence is LLALVVFAVGIVGNLSVMCIV. Topologically, residues 156-167 are cytoplasmic; sequence WHSYYLKSAWNS. The chain crosses the membrane as a helical span at residues 168 to 188; sequence ILASLALWDFLVLFFCLPIVI. Residues 189–205 lie on the Extracellular side of the membrane; it reads FNEITKQRLLGDVSCRA. Cysteine 203 and cysteine 286 are disulfide-bonded. The helical transmembrane segment at 206 to 226 threads the bilayer; that stretch reads VPFMEVSSLGVTTFSLCALGI. Residues 227–251 lie on the Cytoplasmic side of the membrane; sequence DRFHVATSTLPKVRPIERCQSILAK. A helical transmembrane segment spans residues 252–272; the sequence is LAVIWVGSMMLAVPELLLWQL. Residues 273–310 lie on the Extracellular side of the membrane; the sequence is AQEPTPTMGTVDSCIMKPSADLPESLYSLVMTYQNARM. A helical membrane pass occupies residues 311–331; it reads WWYFGCYFCLPILFTVTCQLV. The Cytoplasmic portion of the chain corresponds to 332 to 360; that stretch reads TWRVRGPPGRKPECRAGRHEQCESQLNST. A helical membrane pass occupies residues 361 to 381; that stretch reads VVGLTVVYAFCTLPENICNIV. The Extracellular portion of the chain corresponds to 382–398; the sequence is VAYLSTELTRQTLDLLG. Residues 399-419 form a helical membrane-spanning segment; that stretch reads LINQFSTFFKGAITPVLLLCI. The Cytoplasmic segment spans residues 420 to 481; it reads CRPLGQAFLD…PPLLPLGTPC (62 aa). Position 471 is a phosphoserine (serine 471). Threonine 479 carries the phosphothreonine modification.

It belongs to the G-protein coupled receptor 1 family. As to quaternary structure, interacts with the PTCH1 receptor. In terms of processing, undergoes metalloprotease-mediated cleavage which reduces its constitutive activity. Ubiquitinated. As to expression, highly expressed in brain.

Its subcellular location is the cell membrane. It localises to the cell projection. The protein localises to the cilium membrane. Its function is as follows. G-protein coupled receptor. Has been shown to bind the neuroprotective and glioprotective factor prosaposin (PSAP), leading to endocytosis followed by an ERK phosphorylation cascade. However, other studies have shown that prosaposin does not increase activity. It has been suggested that GPR37L1 is a constitutively active receptor which signals through the guanine nucleotide-binding protein G(s) subunit alpha. Participates in the regulation of postnatal cerebellar development by modulating the Shh pathway. Regulates baseline blood pressure in females and protects against cardiovascular stress in males. Mediates inhibition of astrocyte glutamate transporters and reduction in neuronal N-methyl-D-aspartate receptor activity. This Rattus norvegicus (Rat) protein is G-protein coupled receptor 37-like 1 (Gpr37l1).